Here is a 331-residue protein sequence, read N- to C-terminus: Phosphoribosylformylglycinamidine cyclo-ligase (331 aa).

The protein belongs to the AIR synthase family.

The protein resides in the cytoplasm. The enzyme catalyses 2-formamido-N(1)-(5-O-phospho-beta-D-ribosyl)acetamidine + ATP = 5-amino-1-(5-phospho-beta-D-ribosyl)imidazole + ADP + phosphate + H(+). Its pathway is purine metabolism; IMP biosynthesis via de novo pathway; 5-amino-1-(5-phospho-D-ribosyl)imidazole from N(2)-formyl-N(1)-(5-phospho-D-ribosyl)glycinamide: step 2/2. The sequence is that of Phosphoribosylformylglycinamidine cyclo-ligase from Clostridium botulinum (strain 657 / Type Ba4).